Here is a 75-residue protein sequence, read N- to C-terminus: DNA-directed RNA polymerase subunit omega (75 aa).

Belongs to the RNA polymerase subunit omega family. As to quaternary structure, in cyanobacteria the RNAP catalytic core is composed of 2 alpha, 1 beta, 1 beta', 1 gamma and 1 omega subunit. When a sigma factor is associated with the core the holoenzyme is formed, which can initiate transcription.

It carries out the reaction RNA(n) + a ribonucleoside 5'-triphosphate = RNA(n+1) + diphosphate. Its function is as follows. Promotes RNA polymerase assembly. Latches the N- and C-terminal regions of the beta' subunit thereby facilitating its interaction with the beta and alpha subunits. The chain is DNA-directed RNA polymerase subunit omega from Synechococcus sp. (strain WH7803).